The following is a 391-amino-acid chain: AN1-type zinc finger and UBX domain-containing protein DDB_G0268260 (391 aa).

Positions 1–16 are enriched in low complexity; the sequence is MQQQSPPTAPQQQQQQ. Residues 1 to 20 form a disordered region; the sequence is MQQQSPPTAPQQQQQQQRER. 2 AN1-type zinc fingers span residues 26–74 and 118–166; these read DHIG…QREN and APKS…IINS. Zn(2+) is bound by residues C32, C37, C47, C50, C55, H58, H64, C66, C124, C129, C139, C142, C147, H150, H156, and C158. The span at 185-236 shows a compositional bias: low complexity; that stretch reads NINNNINNNKNNNNNNNNNNNNNNNNNNNNNNNNNNNNNNNNNNNNNSNNNN. The interval 185 to 240 is disordered; the sequence is NINNNINNNKNNNNNNNNNNNNNNNNNNNNNNNNNNNNNNNNNNNNNSNNNNKLIY. The UBX domain occupies 278-356; the sequence is SSEEIGEIGI…GLLPVSTLYM (79 aa).

The protein is AN1-type zinc finger and UBX domain-containing protein DDB_G0268260 of Dictyostelium discoideum (Social amoeba).